The sequence spans 260 residues: Snake venom serine protease KN6 (260 aa).

Residues 1–18 form the signal peptide; it reads MVLIRVLANLLILQLSYA. The propeptide occupies 19–24; sequence QKSSEL. One can recognise a Peptidase S1 domain in the interval 25–251; it reads VIGGDECNIN…HLDWIQSIIA (227 aa). 5 disulfides stabilise this stretch: Cys31/Cys165, Cys100/Cys258, Cys144/Cys212, Cys176/Cys191, and Cys202/Cys227. The Charge relay system role is filled by His67. Residue Asn105 is glycosylated (N-linked (GlcNAc...) asparagine). Residue Asp112 is the Charge relay system of the active site. Asn172 carries N-linked (GlcNAc...) asparagine glycosylation. Ser206 acts as the Charge relay system in catalysis. N-linked (GlcNAc...) asparagine glycosylation is found at Asn213 and Asn255.

The protein belongs to the peptidase S1 family. Snake venom subfamily. As to quaternary structure, monomer. As to expression, expressed by the venom gland.

Its subcellular location is the secreted. Functionally, snake venom serine protease that may act in the hemostasis system of the prey. This chain is Snake venom serine protease KN6, found in Trimeresurus stejnegeri (Chinese green tree viper).